Reading from the N-terminus, the 307-residue chain is MSESAPAGSKEGVSFGNLPRPEPRTSKDQQKLSISTDVKKPSHSAPVTPVRSARSSMEQPTFRPVAKNSVTVAPARAAGFCPPQFEEYHHGRSHSLVSPPPSPHFLKRISFDTFNNKAATDFSLTLKTQHQAYKWTRTSRTFLCGMDGNSYSEVAVDWLFETLLADNDEAVVLRVIDPSSKLAEDLSDEQSYRSLAEHIMAGILKKVDDDKAVSIIVELVVGKPQDMILRTIHVYSPDSLIVGTRGKALNSFQSLLSSGSVSKFCLQKSPIPVIVVRPDRKRVRSKNKRLKDKTRKSYMEILEKSGR.

A disordered region spans residues 1–63 (MSESAPAGSK…RSSMEQPTFR (63 aa)). Residues 21-30 (PEPRTSKDQQ) are compositionally biased toward basic and acidic residues. At S44 the chain carries Phosphoserine. T48 is subject to Phosphothreonine. 2 positions are modified to phosphoserine: S98 and S102.

This sequence belongs to the universal stress protein A family.

It is found in the barrier septum. It localises to the cell tip. This is Universal stress protein A family protein C25B2.10 from Schizosaccharomyces pombe (strain 972 / ATCC 24843) (Fission yeast).